A 210-amino-acid chain; its full sequence is Large ribosomal subunit protein uL4 (210 aa).

Polar residues predominate over residues 41-51 (QNNARQGNASA). The tract at residues 41-77 (QNNARQGNASAKTRAEVRGGGRKPWKQKGTGRARAGS) is disordered. Basic residues predominate over residues 60 to 71 (GGRKPWKQKGTG).

The protein belongs to the universal ribosomal protein uL4 family. In terms of assembly, part of the 50S ribosomal subunit.

In terms of biological role, one of the primary rRNA binding proteins, this protein initially binds near the 5'-end of the 23S rRNA. It is important during the early stages of 50S assembly. It makes multiple contacts with different domains of the 23S rRNA in the assembled 50S subunit and ribosome. Its function is as follows. Forms part of the polypeptide exit tunnel. This is Large ribosomal subunit protein uL4 from Synechocystis sp. (strain ATCC 27184 / PCC 6803 / Kazusa).